Consider the following 459-residue polypeptide: Endoglucanase EG-1 (459 aa).

The first 22 residues, 1–22, serve as a signal peptide directing secretion; it reads MAPSVTLPLTTAILAIARLVAA. Gln-23 is subject to Pyrrolidone carboxylic acid. The tract at residues 23 to 397 is catalytic; that stretch reads QQPGTSTPEV…DIGSTTNSTA (375 aa). Disulfide bonds link Cys-41–Cys-47, Cys-71–Cys-92, Cys-82–Cys-88, Cys-161–Cys-360, Cys-193–Cys-216, Cys-197–Cys-215, Cys-236–Cys-241, and Cys-246–Cys-315. The N-linked (GlcNAc) asparagine glycan is linked to Asn-78. N-linked (GlcNAc...) (high mannose) asparagine glycosylation is present at Asn-204. Glu-218 acts as the Nucleophile in catalysis. Glu-223 (proton donor/acceptor) is an active-site residue. Residues 390–425 are disordered; it reads GSTTNSTAPPPPPASSTTFSTTRRSSTTSSSPSCTQ. Asn-394 is a glycosylation site (N-linked (GlcNAc...) asparagine). The linker stretch occupies residues 398-423; it reads PPPPPASSTTFSTTRRSSTTSSSPSC. Positions 404 to 425 are enriched in low complexity; it reads SSTTFSTTRRSSTTSSSPSCTQ. Disulfide bonds link Cys-423–Cys-439, Cys-431–Cys-448, and Cys-442–Cys-458. The CBM1 domain occupies 423-459; the sequence is CTQTHWGQCGGIGYSGCKTCTSGTTCQYSNDYYSQCL.

The protein belongs to the glycosyl hydrolase 7 (cellulase C) family. Post-translationally, asn-204 contains mainly a high-mannose-type glycan (Hex(7-9)GlcNAc(2)), with a small fraction (8%) bearing a single GlcNAc at this site.

It localises to the secreted. It catalyses the reaction Endohydrolysis of (1-&gt;4)-beta-D-glucosidic linkages in cellulose, lichenin and cereal beta-D-glucans.. In terms of biological role, endoglucanase (EG) that cleaves the internal beta-1,4-glucosidic bonds in cellulose. The degradation of cellulose involves an interplay between different cellulolytic enzymes. Hydrolysis starts with EGs, which cut internal glycosidic linkages to reduce the polymerization degree of the substrate and creates new chain ends for exocellobiohydrolases (CBHs). The CBH release the disaccharide cellobiose from the non-reducing end of the cellulose polymer chain. Finally, beta-1,4-glucosidases hydrolyze the cellobiose and other short cello-oligosaccharides into glucose units. This Hypocrea jecorina (Trichoderma reesei) protein is Endoglucanase EG-1 (egl1).